Consider the following 779-residue polypeptide: Glucan endo-1,3-beta-D-glucosidase 2 (779 aa).

Residues M1–N71 are disordered. Over residues R57–N71 the composition is skewed to polar residues. A beta-sandwich subdomain region spans residues D73–D309. The GH81 domain occupies D73 to S779. Residues D309–Q400 are alpha/beta subdomain. Residues I375 to S779 are sufficient for catalytic activity. Residues N415–S779 are (alpha/beta)6 barrel subdomain. D526 is an active-site residue. Residues H530, D607, E609, and E613 each contribute to the (1,3-beta-D-glucosyl)n site. Residues E609 and E613 contribute to the active site. The tract at residues K678–D680 is may provide specificity for triple-helical beta-glucan. Y691 provides a ligand contact to (1,3-beta-D-glucosyl)n.

This sequence belongs to the glycosyl hydrolase 81 family.

It is found in the cytoplasm. It catalyses the reaction Hydrolysis of (1-&gt;3)-beta-D-glucosidic linkages in (1-&gt;3)-beta-D-glucans.. Its activity is regulated as follows. Inhibited by mercury ions. Functionally, cleaves internal linkages in 1,3-beta-glucan. The polypeptide is Glucan endo-1,3-beta-D-glucosidase 2 (Saccharomyces cerevisiae (strain ATCC 204508 / S288c) (Baker's yeast)).